Here is a 3065-residue protein sequence, read N- to C-terminus: MAX gene-associated protein (3065 aa).

Glycyl lysine isopeptide (Lys-Gly) (interchain with G-Cter in SUMO2) cross-links involve residues Lys-4 and Lys-178. Residues 84–260 constitute a DNA-binding region (T-box); sequence MWNEFYHRST…YNPFAKGFRD (177 aa). Residues 259–277 are compositionally biased toward basic and acidic residues; sequence RDDGLNNKPQRDGKQKNSS. The disordered stretch occupies residues 259–322; it reads RDDGLNNKPQ…GHETSGKGLE (64 aa). The span at 278–289 shows a compositional bias: polar residues; sequence DQEGNNISSSSG. Basic and acidic residues predominate over residues 309–322; that stretch reads PLSRGHETSGKGLE. Glycyl lysine isopeptide (Lys-Gly) (interchain with G-Cter in SUMO2) cross-links involve residues Lys-323, Lys-329, Lys-349, Lys-432, Lys-460, Lys-465, and Lys-482. At Ser-534 the chain carries Phosphoserine. Residue Lys-570 forms a Glycyl lysine isopeptide (Lys-Gly) (interchain with G-Cter in SUMO2) linkage. Residues 604-653 form a disordered region; that stretch reads QNASPNVPGKRGRPRKLKLCKAGRPPKNTGKSLISTKNTPVSPGSTFPDV. Ser-607 is modified (phosphoserine). Residue Lys-613 forms a Glycyl lysine isopeptide (Lys-Gly) (interchain with G-Cter in SUMO2) linkage. Residues 613–624 are compositionally biased toward basic residues; it reads KRGRPRKLKLCK. Residues 632-648 are compositionally biased toward polar residues; the sequence is TGKSLISTKNTPVSPGS. Position 645 is a phosphoserine (Ser-645). Glycyl lysine isopeptide (Lys-Gly) (interchain with G-Cter in SUMO2) cross-links involve residues Lys-654, Lys-785, Lys-791, Lys-817, and Lys-826. Ser-851 is subject to Phosphoserine. The disordered stretch occupies residues 881–911; sequence STSYSLKPHSVPPVSRKAKSQNRQATFSGRT. Over residues 901 to 911 the composition is skewed to polar residues; the sequence is QNRQATFSGRT. Residue Ser-924 is modified to Phosphoserine. Lys-928 is covalently cross-linked (Glycyl lysine isopeptide (Lys-Gly) (interchain with G-Cter in SUMO2)). The interval 971-990 is disordered; it reads RQAQQQQQQQQGSRPPGLSK. The segment covering 972–981 has biased composition (low complexity); the sequence is QAQQQQQQQQ. Residues Lys-990, Lys-1091, Lys-1140, Lys-1162, Lys-1199, and Lys-1207 each participate in a glycyl lysine isopeptide (Lys-Gly) (interchain with G-Cter in SUMO2) cross-link. Positions 1111 to 1147 form a coiled coil; sequence YDTLGEEAREEEEGIREEEEQLKEKKKRKKLEYTICE. The residue at position 1208 (Ser-1208) is a Phosphoserine. Disordered stretches follow at residues 1246–1332 and 1380–1429; these read RKKE…PGGP and RKSR…MEDI. Low complexity-rich tracts occupy residues 1253-1269 and 1310-1322; these read QPSS…QQTS and KSSC…SSTS. Residues Ser-1430 and Ser-1457 each carry the phosphoserine modification. Glycyl lysine isopeptide (Lys-Gly) (interchain with G-Cter in SUMO2) cross-links involve residues Lys-1461 and Lys-1502. 3 disordered regions span residues 1488–1517, 1905–1927, and 1967–2029; these read SRKP…PGKN, SPPE…YSSG, and QMKR…EDRG. 2 stretches are compositionally biased toward polar residues: residues 1495–1514 and 1911–1927; these read LPST…TNRP and SFAS…YSSG. Residues 1968 to 1994 are compositionally biased toward basic and acidic residues; that stretch reads MKRESQNPDQKDETNSIKREQETKKVL. Glycyl lysine isopeptide (Lys-Gly) (interchain with G-Cter in SUMO2) cross-links involve residues Lys-1985 and Lys-1992. The span at 2008–2023 shows a compositional bias: polar residues; that stretch reads IKQNSGAATSEETLND. Glycyl lysine isopeptide (Lys-Gly) (interchain with G-Cter in SUMO2) cross-links involve residues Lys-2103, Lys-2113, Lys-2135, Lys-2139, Lys-2146, Lys-2159, Lys-2194, Lys-2206, and Lys-2238. A disordered region spans residues 2258 to 2316; sequence RRAAKSSRGNGHFQGHLLLPGEQIQPKQEKKGGRSSADFTVLDLEEDDEDDNEKTDDSI. Residue Arg-2265 is modified to Omega-N-methylarginine. Residue Lys-2284 forms a Glycyl lysine isopeptide (Lys-Gly) (interchain with G-Cter in SUMO2) linkage. Positions 2300 to 2316 are enriched in acidic residues; it reads DLEEDDEDDNEKTDDSI. Glycyl lysine isopeptide (Lys-Gly) (interchain with G-Cter in SUMO2) cross-links involve residues Lys-2378, Lys-2413, Lys-2457, and Lys-2532. The bHLH domain occupies 2423–2474; that stretch reads YYRRTHTANERRRRGEMRDLFEKLKITLGLLHSSKVSKSLILTRAFSEIQGL. Ser-2541 bears the Phosphoserine mark. Residue Lys-2546 forms a Glycyl lysine isopeptide (Lys-Gly) (interchain with G-Cter in SUMO2) linkage. The interval 2576–2595 is disordered; it reads KKDQATENTSPLNTPHTSAN. Polar residues predominate over residues 2581–2595; that stretch reads TENTSPLNTPHTSAN. Glycyl lysine isopeptide (Lys-Gly) (interchain with G-Cter in SUMO2) cross-links involve residues Lys-2629, Lys-2679, Lys-2698, and Lys-2784. Residues 2668–2709 form a disordered region; it reads GSKYPHEVPDSKPSDHLKDTVRNEDNSLEDKGRISSRGNRDG. Basic and acidic residues predominate over residues 2671-2709; sequence YPHEVPDSKPSDHLKDTVRNEDNSLEDKGRISSRGNRDG. The stretch at 2817–2841 forms a coiled coil; it reads DDTDETLTSLLNEIAFLNQQLNDDS. Ser-2910 and Ser-2921 each carry phosphoserine. A disordered region spans residues 2944–2968; the sequence is AIDGGKNTSGLPAEPESVSSPPTLH. Ser-2978 bears the Phosphoserine mark. A Glycyl lysine isopeptide (Lys-Gly) (interchain with G-Cter in SUMO2) cross-link involves residue Lys-3041.

In terms of assembly, interacts with MAX. Requires dimerization with MAX for E-box binding. Component of some MLL1/MLL complex, at least composed of the core components KMT2A/MLL1, ASH2L, HCFC1/HCF1, WDR5 and RBBP5, as well as the facultative components BACC1, CHD8, E2F6, HSP70, INO80C, KANSL1, LAS1L, MAX, MCRS1, MGA, MYST1/MOF, PELP1, PHF20, PRP31, RING2, RUVB1/TIP49A, RUVB2/TIP49B, SENP3, TAF1, TAF4, TAF6, TAF7, TAF9 and TEX10. Interacts with ZMYND11. Highly expressed in germ cells and granulosa cells.

The protein resides in the nucleus. Its function is as follows. Functions as a dual-specificity transcription factor, regulating the expression of both MAX-network and T-box family target genes. Functions as a repressor or an activator. Binds to 5'-AATTTCACACCTAGGTGTGAAATT-3' core sequence and seems to regulate MYC-MAX target genes. Suppresses transcriptional activation by MYC and inhibits MYC-dependent cell transformation. Function activated by heterodimerization with MAX. This heterodimerization serves the dual function of both generating an E-box-binding heterodimer and simultaneously blocking interaction of a corepressor. This Homo sapiens (Human) protein is MAX gene-associated protein.